Reading from the N-terminus, the 550-residue chain is ATP-dependent RNA helicase MSS116, mitochondrial (550 aa).

Residues 1–11 (MPPPPKRKWPN) are compositionally biased toward basic residues. The transit peptide at 1 to 41 (MPPPPKRKWPNRPRGGGGANGSASGTPTTPRSTVAQQPKRP) directs the protein to the mitochondrion. The disordered stretch occupies residues 1–51 (MPPPPKRKWPNRPRGGGGANGSASGTPTTPRSTVAQQPKRPKVEDAAPAAE). The short motif at 71-99 (FSELSSVLDKSLLDGLDKMGFEFMSPVQQ) is the Q motif element. Residues 103–285 (TELPSLSSDC…KIVLFPGFTH (183 aa)) enclose the Helicase ATP-binding domain. 116–123 (AKTGTGKT) is a binding site for ATP. Positions 230-233 (DEAD) match the DEAD box motif. The Helicase C-terminal domain occupies 316–472 (ALSALIQEEH…KVPEQEAAIT (157 aa)).

It belongs to the DEAD box helicase family. DDX18/HAS1 subfamily.

The protein localises to the mitochondrion matrix. It catalyses the reaction ATP + H2O = ADP + phosphate + H(+). ATP-dependent RNA helicase required for mitochondrial splicing of group I and II introns. Also required for efficient mitochondrial translation. The sequence is that of ATP-dependent RNA helicase MSS116, mitochondrial (MSS116) from Phaeosphaeria nodorum (strain SN15 / ATCC MYA-4574 / FGSC 10173) (Glume blotch fungus).